We begin with the raw amino-acid sequence, 227 residues long: Lipoprotein-releasing system ATP-binding protein LolD (227 aa).

The 221-residue stretch at Leu-7–Ala-227 folds into the ABC transporter domain. Gly-43–Ser-50 contributes to the ATP binding site.

The protein belongs to the ABC transporter superfamily. Lipoprotein translocase (TC 3.A.1.125) family. The complex is composed of two ATP-binding proteins (LolD) and two transmembrane proteins (LolC and LolE).

It is found in the cell inner membrane. Functionally, part of the ABC transporter complex LolCDE involved in the translocation of mature outer membrane-directed lipoproteins, from the inner membrane to the periplasmic chaperone, LolA. Responsible for the formation of the LolA-lipoprotein complex in an ATP-dependent manner. The protein is Lipoprotein-releasing system ATP-binding protein LolD of Pseudomonas syringae pv. tomato (strain ATCC BAA-871 / DC3000).